A 570-amino-acid chain; its full sequence is Sulfite reductase [NADPH] hemoprotein beta-component (570 aa).

The [4Fe-4S] cluster site is built by C433, C439, C478, and C482. A siroheme-binding site is contributed by C482.

The protein belongs to the nitrite and sulfite reductase 4Fe-4S domain family. Alpha(8)-beta(8). The alpha component is a flavoprotein, the beta component is a hemoprotein. Siroheme is required as a cofactor. It depends on [4Fe-4S] cluster as a cofactor.

It catalyses the reaction hydrogen sulfide + 3 NADP(+) + 3 H2O = sulfite + 3 NADPH + 4 H(+). It participates in sulfur metabolism; hydrogen sulfide biosynthesis; hydrogen sulfide from sulfite (NADPH route): step 1/1. In terms of biological role, component of the sulfite reductase complex that catalyzes the 6-electron reduction of sulfite to sulfide. This is one of several activities required for the biosynthesis of L-cysteine from sulfate. The sequence is that of Sulfite reductase [NADPH] hemoprotein beta-component from Aeromonas hydrophila subsp. hydrophila (strain ATCC 7966 / DSM 30187 / BCRC 13018 / CCUG 14551 / JCM 1027 / KCTC 2358 / NCIMB 9240 / NCTC 8049).